The chain runs to 287 residues: Glutamate racemase (287 aa).

Substrate contacts are provided by residues 32–33 (DS) and 64–65 (YG). Catalysis depends on cysteine 96, which acts as the Proton donor/acceptor. Substrate is bound at residue 97–98 (NT). Cysteine 208 acts as the Proton donor/acceptor in catalysis. 209 to 210 (TH) provides a ligand contact to substrate.

The protein belongs to the aspartate/glutamate racemases family.

The enzyme catalyses L-glutamate = D-glutamate. The protein operates within cell wall biogenesis; peptidoglycan biosynthesis. Provides the (R)-glutamate required for cell wall biosynthesis. This Photorhabdus laumondii subsp. laumondii (strain DSM 15139 / CIP 105565 / TT01) (Photorhabdus luminescens subsp. laumondii) protein is Glutamate racemase.